Here is a 61-residue protein sequence, read N- to C-terminus: UPF0312 protein (61 aa).

It belongs to the UPF0312 family.

In Delftia acidovorans (Pseudomonas acidovorans), this protein is UPF0312 protein.